The following is a 342-amino-acid chain: Dihydroorotase (342 aa).

Residues His13 and His15 each coordinate Zn(2+). Substrate contacts are provided by residues 15–17 (HLR) and Asn41. Residues Lys98, His135, and His173 each coordinate Zn(2+). Residue Lys98 is modified to N6-carboxylysine. His135 lines the substrate pocket. Leu218 contacts substrate. Asp246 lines the Zn(2+) pocket. Residue Asp246 is part of the active site. Substrate contacts are provided by His250 and Ala262.

It belongs to the metallo-dependent hydrolases superfamily. DHOase family. Class II DHOase subfamily. Homodimer. It depends on Zn(2+) as a cofactor.

It catalyses the reaction (S)-dihydroorotate + H2O = N-carbamoyl-L-aspartate + H(+). It participates in pyrimidine metabolism; UMP biosynthesis via de novo pathway; (S)-dihydroorotate from bicarbonate: step 3/3. Functionally, catalyzes the reversible cyclization of carbamoyl aspartate to dihydroorotate. In Aliivibrio fischeri (strain MJ11) (Vibrio fischeri), this protein is Dihydroorotase.